A 717-amino-acid chain; its full sequence is Catalase-peroxidase (717 aa).

Residues 1–12 (MTSKGMCPVAHG) form the signal peptide. A cross-link (tryptophyl-tyrosyl-methioninium (Trp-Tyr) (with M-247)) is located at residues 93-221 (WHSAGSYRIA…LAAVMMGLIY (129 aa)). The active-site Proton acceptor is His94. The segment at residues 221-247 (YVNPEGVDGKPDPLKTAQDMRVTFARM) is a cross-link (tryptophyl-tyrosyl-methioninium (Tyr-Met) (with W-93)). Position 262 (His262) interacts with heme b.

It belongs to the peroxidase family. Peroxidase/catalase subfamily. Homodimer or homotetramer. Heme b serves as cofactor. In terms of processing, formation of the three residue Trp-Tyr-Met cross-link is important for the catalase, but not the peroxidase activity of the enzyme.

It carries out the reaction H2O2 + AH2 = A + 2 H2O. It catalyses the reaction 2 H2O2 = O2 + 2 H2O. Bifunctional enzyme with both catalase and broad-spectrum peroxidase activity. The polypeptide is Catalase-peroxidase (Polynucleobacter asymbioticus (strain DSM 18221 / CIP 109841 / QLW-P1DMWA-1) (Polynucleobacter necessarius subsp. asymbioticus)).